The chain runs to 133 residues: MIIGLGNDMIDIRRIEKILIRHSSRFIQRIFTDIEQNKSENFPKRSYAYAKRFAAKEACAKALGTGIAYGVNWRDIGIVNSPSGKPTIKLTNHAQIQLEKLLPSNHDAFIHLSMTDDFPWAQAFVIIEALPRG.

Mg(2+) is bound by residues Asp-8 and Glu-57.

Belongs to the P-Pant transferase superfamily. AcpS family. Mg(2+) is required as a cofactor.

The protein resides in the cytoplasm. It catalyses the reaction apo-[ACP] + CoA = holo-[ACP] + adenosine 3',5'-bisphosphate + H(+). Functionally, transfers the 4'-phosphopantetheine moiety from coenzyme A to a Ser of acyl-carrier-protein. In Bartonella bacilliformis (strain ATCC 35685 / KC583 / Herrer 020/F12,63), this protein is Holo-[acyl-carrier-protein] synthase.